The chain runs to 214 residues: MIPKCRCSAGGLADRTPYEEVVLDTMLYSARLKENVARQNSAVIVAMARLIASTFEDGGKLLLCGNGGSAADAQHLATELTIRYRSSVERPALPAIALNADTTALTAGANDLGYDVVFRRLAEAYGREGDVVLGLSTSGNSRSVFNVLQYARGHGMKTIALTGGDGGIIKDLADLSIVVPHSGSADRVQECHITIGHVIIDLVERLLGYSPSRK.

The SIS domain occupies 51 to 209 (IASTFEDGGK…IDLVERLLGY (159 aa)). 66 to 68 (NGG) provides a ligand contact to substrate. Residues histidine 75 and glutamate 79 each contribute to the Zn(2+) site. Substrate-binding positions include glutamate 79, 110–111 (ND), 136–138 (STS), serine 141, and glutamine 189. Zn(2+)-binding residues include glutamine 189 and histidine 197.

This sequence belongs to the SIS family. GmhA subfamily. It depends on Zn(2+) as a cofactor.

Its subcellular location is the cytoplasm. It catalyses the reaction 2 D-sedoheptulose 7-phosphate = D-glycero-alpha-D-manno-heptose 7-phosphate + D-glycero-beta-D-manno-heptose 7-phosphate. The protein operates within carbohydrate biosynthesis; D-glycero-D-manno-heptose 7-phosphate biosynthesis; D-glycero-alpha-D-manno-heptose 7-phosphate and D-glycero-beta-D-manno-heptose 7-phosphate from sedoheptulose 7-phosphate: step 1/1. Its function is as follows. Catalyzes the isomerization of sedoheptulose 7-phosphate in D-glycero-D-manno-heptose 7-phosphate. This is Phosphoheptose isomerase from Chlorobium limicola (strain DSM 245 / NBRC 103803 / 6330).